The following is a 266-amino-acid chain: Short-chain dehydrogenase/reductase atnB (266 aa).

3 residues coordinate NADP(+): isoleucine 13, aspartate 57, and asparagine 85. Residues serine 147 and tyrosine 166 each act as proton donor in the active site. Positions 166, 170, 199, and 201 each coordinate NADP(+). Lysine 170 functions as the Lowers pKa of active site Tyr in the catalytic mechanism.

This sequence belongs to the short-chain dehydrogenases/reductases (SDR) family.

It participates in secondary metabolite biosynthesis; terpenoid biosynthesis. Short-chain dehydrogenase/reductase; part of the gene cluster that mediates the biosynthesis of the meroterpenoids arthripenoids. The pathway begins with the HR-PKS atnH that catalyzes two chain-extension steps to form a reduced triketide, which then primes the SAT domain in the NR-PKS atnG to initiate three more cycles of extension to give a linear hexaketide corresponding to the polyketide part of arthripenoids. The FAD-dependent monooxygenase atnJ then performs an oxidative decarboxylation at C11 of the atnH/atnG product, via an electrophilic aromatic hydroxylation with concomitant ipso-decarboxylation. The membrane-bound polyprenyl transferase atnF then introduces a farnesyl group before the FAD-dependent monooxygenase atnK functions as the first epoxidase on terminal C12'-C13' olefin, followed by a second epoxidation on C7'-C8' catalyzed by atnA. The terpene cyclase/mutase atnI then initiates the sequential tricyclic ring formation through protonation of the terminal epoxide and catalyzes the regioselective and stereoselective 6/6/6-tricyclic ring formation. The cytochrome P450 monooxygenase atnM is responsible for hydroxylating both C1' and C10'. The next steps may involve ketoreduction and acetyl transfer by the ketoreductase atnB and the acetyltransferase atnC, and lead to the production of arthripenoid B, the final biosynthetic product of the atn cluster. The hydroquinone moiety in arthripenoid B is prone to undergo spontaneous oxidation to afford a benzoquinone compound, a key intermediate for generating structure diversity. For instance, addition of a cysteine followed by ring contraction gives arthripenoid A, tautomerization gives the main product arthripenoid C, addition of a molecular of water or amine affords arthripenoid D or E, respectively, and loss of one water forms arthripenoid F. This Arthrinium sp protein is Short-chain dehydrogenase/reductase atnB.